We begin with the raw amino-acid sequence, 142 residues long: MFAVIKTGGKQYRVAANDLIKVEKVAGEAGDIVEFAEVLMVGSTIGAPTVAGALVTAEVVEQGRGRKVIAFKKRRRQNSKRTRGHRQELTTIRISEILTDGAKPSKKAAEKKAPKADAAEGEAAKPKKAAPKKAAAKAESAE.

A compositionally biased stretch (basic residues) spans 74–84; the sequence is RRRQNSKRTRG. A disordered region spans residues 74–142; sequence RRRQNSKRTR…KAAAKAESAE (69 aa). The span at 107–125 shows a compositional bias: basic and acidic residues; it reads KAAEKKAPKADAAEGEAAK. Basic residues predominate over residues 126–135; it reads PKKAAPKKAA.

It belongs to the bacterial ribosomal protein bL21 family. In terms of assembly, part of the 50S ribosomal subunit. Contacts protein L20.

Its function is as follows. This protein binds to 23S rRNA in the presence of protein L20. The protein is Large ribosomal subunit protein bL21 of Brucella melitensis biotype 2 (strain ATCC 23457).